Here is a 140-residue protein sequence, read N- to C-terminus: MAIYGIGTDIVQVSRVAAVMTRTNGRFAEKVLGPDELRVYHARHARSAARGLAFLATRFSAKEAFSKAIGLGMHWPMTWRALQTLNKPSGEPMVVASGELAEWLDARGITARVTISDERDYAVSFVIAETAQAGAADIAE.

Mg(2+) contacts are provided by Asp9 and Glu63.

It belongs to the P-Pant transferase superfamily. AcpS family. Requires Mg(2+) as cofactor.

It localises to the cytoplasm. The catalysed reaction is apo-[ACP] + CoA = holo-[ACP] + adenosine 3',5'-bisphosphate + H(+). In terms of biological role, transfers the 4'-phosphopantetheine moiety from coenzyme A to a Ser of acyl-carrier-protein. The chain is Holo-[acyl-carrier-protein] synthase from Paraburkholderia phytofirmans (strain DSM 17436 / LMG 22146 / PsJN) (Burkholderia phytofirmans).